Reading from the N-terminus, the 598-residue chain is MMENNRNYFIAIALSVLIVLGWQFLYMNPRIEAQRKAQEAQKAQQQTEQVQQPAAGGQTPAQTSGAAPSGQAAATATLEQALQKSPRVVIDTPALSGSINLAGARLDDLKLKGYHETVDDSSPIITLFSPAETKDGYFTELGYIGSDATGSVPGPSTLWTAPEGAKLTEKTPVTLSYTNDKGLTFTRTISVDERYMFTVADKIENTGQAPAALSSYGRVTRYNKPTTPSVYVLHEGFIGVIGDDGLIETKYSAVEKEAVAPAKSTGGWLGITDKYWAATIVPPQSAAYEAHFSYFADGQPRYQADYKDDAFTVAPGQSIELKNLVFAGAKEVPVIDGYEASYSIPKFDRLIDWGWFYFITKPMFKLMDFFFRYFGNFGVAILCTTIVVKALFFPLASKQYASMANMKRMQPKMEELKAKFADDRMGLQQATMQLYKEEKINPIAGCWPVALQIPIFFSLYKVIYITIEMRHAPFFGWIKDLSAPDPTTIVNLFGLLPFEGPTLLHLGVWPLIMGVTMFVQMRMNPTPPDPTQAMIFNWMPLVFMFMLASFPAGLVIYWAWNNTLSVAQQGLIMKRHGVKVELFDNLKGLFRRKEAPSK.

Residues 7–27 (NYFIAIALSVLIVLGWQFLYM) form a helical membrane-spanning segment. The disordered stretch occupies residues 37 to 76 (AQEAQKAQQQTEQVQQPAAGGQTPAQTSGAAPSGQAAATA). Over residues 40–76 (AQKAQQQTEQVQQPAAGGQTPAQTSGAAPSGQAAATA) the composition is skewed to low complexity. 4 helical membrane-spanning segments follow: residues 377 to 397 (FGVA…PLAS), 447 to 467 (WPVA…YITI), 492 to 512 (LFGL…WPLI), and 538 to 558 (WMPL…VIYW).

This sequence belongs to the OXA1/ALB3/YidC family. Type 1 subfamily. As to quaternary structure, interacts with the Sec translocase complex via SecD. Specifically interacts with transmembrane segments of nascent integral membrane proteins during membrane integration.

It localises to the cell inner membrane. In terms of biological role, required for the insertion and/or proper folding and/or complex formation of integral membrane proteins into the membrane. Involved in integration of membrane proteins that insert both dependently and independently of the Sec translocase complex, as well as at least some lipoproteins. Aids folding of multispanning membrane proteins. This is Membrane protein insertase YidC from Rhizobium johnstonii (strain DSM 114642 / LMG 32736 / 3841) (Rhizobium leguminosarum bv. viciae).